Reading from the N-terminus, the 211-residue chain is MKPMQRLTCLLALCFAASASAKVTMEIPDTIDLLVVNGSSPKLSGGFFDATKKLELEDGEQQIVFRYSPYFSQGNDRIIIDSEVVIATFDAANQELRFDMPKYRDAPQATKAIKTMQWQLLDQQGKAVELRQDRLIKEGMQIGRNFEFETAEYNKKGGVAALTSSMAVQPIAQQEISNATAMAAAEEMLHFWYNKADAETKARFKAFVNQQ.

A signal peptide spans M1–A21.

This sequence belongs to the UPF0319 family.

The polypeptide is UPF0319 protein VC_A0026 (Vibrio cholerae serotype O1 (strain ATCC 39315 / El Tor Inaba N16961)).